Consider the following 701-residue polypeptide: DNA ligase (701 aa).

Residues 58 to 62 (DYEYD), 107 to 108 (SL), and glutamate 138 contribute to the NAD(+) site. Lysine 140 (N6-AMP-lysine intermediate) is an active-site residue. Residues arginine 161, glutamate 199, lysine 323, and lysine 347 each coordinate NAD(+). Residues cysteine 441, cysteine 444, cysteine 459, and cysteine 464 each coordinate Zn(2+). The region spanning 621-701 (EKRGKLAGLN…EEFLKMIGQQ (81 aa)) is the BRCT domain.

It belongs to the NAD-dependent DNA ligase family. LigA subfamily. Mg(2+) serves as cofactor. The cofactor is Mn(2+).

It carries out the reaction NAD(+) + (deoxyribonucleotide)n-3'-hydroxyl + 5'-phospho-(deoxyribonucleotide)m = (deoxyribonucleotide)n+m + AMP + beta-nicotinamide D-nucleotide.. Its function is as follows. DNA ligase that catalyzes the formation of phosphodiester linkages between 5'-phosphoryl and 3'-hydroxyl groups in double-stranded DNA using NAD as a coenzyme and as the energy source for the reaction. It is essential for DNA replication and repair of damaged DNA. The protein is DNA ligase of Sulfurihydrogenibium azorense (strain DSM 15241 / OCM 825 / Az-Fu1).